Reading from the N-terminus, the 126-residue chain is Small ribosomal subunit protein bS6 (126 aa).

The interval 101 to 126 is disordered; it reads VMMKAKEERSAKREDAAPRAEEAAAE. The span at 104–126 shows a compositional bias: basic and acidic residues; that stretch reads KAKEERSAKREDAAPRAEEAAAE.

Belongs to the bacterial ribosomal protein bS6 family.

Functionally, binds together with bS18 to 16S ribosomal RNA. The protein is Small ribosomal subunit protein bS6 of Aliivibrio fischeri (strain ATCC 700601 / ES114) (Vibrio fischeri).